Reading from the N-terminus, the 314-residue chain is tRNA pseudouridine synthase B (314 aa).

Residue His43 participates in substrate binding. Catalysis depends on Asp48, which acts as the Nucleophile. Residues Tyr76, Tyr179, and Leu200 each contribute to the substrate site.

The protein belongs to the pseudouridine synthase TruB family. Type 1 subfamily.

The enzyme catalyses uridine(55) in tRNA = pseudouridine(55) in tRNA. In terms of biological role, responsible for synthesis of pseudouridine from uracil-55 in the psi GC loop of transfer RNAs. The polypeptide is tRNA pseudouridine synthase B (Salmonella paratyphi A (strain ATCC 9150 / SARB42)).